A 150-amino-acid chain; its full sequence is Glycine cleavage system H-like protein gcvH2 (150 aa).

Positions 44 to 126 (VATVGLSSFG…PANNWMVKFK (83 aa)) constitute a Lipoyl-binding domain.

This sequence belongs to the GcvH family.

The polypeptide is Glycine cleavage system H-like protein gcvH2 (gcvH2) (Dictyostelium discoideum (Social amoeba)).